Here is a 309-residue protein sequence, read N- to C-terminus: MPIRVPDELPAVNFLRNENVFVMTSTRASTQMIRPLKVLVLNLMPKKIETENQFLRLLSNSPLQIDIQLLRIDTRESRNTPSEHLNNFYRNFEDIQHDNYDGLIVTGAPLGLVDFCDVAYWPQIHKVLHWAKEHVTSTLFVCWAVQAALNILYGIPKQTRDSKLSGVFDHQILHPHALLTRGFDDTFLAPHSRYADFPAGLIRDYTDLEIFAESEQTGAYLFASKDKRLAFVTGHPEYDALTLSGEYHRDYEAGLNPEIPFNYFPQDNPQLEPRASWRSHGNLLFSNWLNYYVYQITPFDLRHMNPTLD.

Cysteine 142 serves as the catalytic Acyl-thioester intermediate. Substrate is bound by residues lysine 163 and serine 192. The Proton acceptor role is filled by histidine 235. Glutamate 237 is an active-site residue. Substrate is bound at residue arginine 249.

This sequence belongs to the MetA family.

It is found in the cytoplasm. It catalyses the reaction L-homoserine + succinyl-CoA = O-succinyl-L-homoserine + CoA. Its pathway is amino-acid biosynthesis; L-methionine biosynthesis via de novo pathway; O-succinyl-L-homoserine from L-homoserine: step 1/1. Its function is as follows. Transfers a succinyl group from succinyl-CoA to L-homoserine, forming succinyl-L-homoserine. The sequence is that of Homoserine O-succinyltransferase from Erwinia tasmaniensis (strain DSM 17950 / CFBP 7177 / CIP 109463 / NCPPB 4357 / Et1/99).